The chain runs to 269 residues: Ribonuclease HII (269 aa).

The RNase H type-2 domain occupies 61 to 250; that stretch reads RLVCGVDEAG…VRKMLSPGLE (190 aa). A divalent metal cation contacts are provided by D67, E68, and D158.

Belongs to the RNase HII family. The cofactor is Mn(2+). Mg(2+) serves as cofactor.

It is found in the cytoplasm. It catalyses the reaction Endonucleolytic cleavage to 5'-phosphomonoester.. Functionally, endonuclease that specifically degrades the RNA of RNA-DNA hybrids. This is Ribonuclease HII from Parvibaculum lavamentivorans (strain DS-1 / DSM 13023 / NCIMB 13966).